Here is a 1101-residue protein sequence, read N- to C-terminus: ATP-citrate synthase (1101 aa).

Residues 4-265 (KAISEQTGKE…LDAKSGASLK (262 aa)) form the ATP-grasp domain. Residues Lys58, Arg66, Gly67, Pro109, Val111, and Glu118 each coordinate ATP. Tyr131 carries the phosphotyrosine modification. Asp216 contributes to the ATP binding site. The Mg(2+) site is built by Asp257, Ser260, and Ala262. Ser263 bears the Phosphoserine mark. Citrate-binding residues include Gly309, Asn346, Thr348, Tyr364, and Arg379. Positions 441–457 (ASGSTSTPAPSRTASFS) are enriched in low complexity. A disordered region spans residues 441–487 (ASGSTSTPAPSRTASFSESRADEVAPAKKAKPAMPQDSVPSPRSLQG). Thr447 carries the post-translational modification Phosphothreonine. At Ser451 the chain carries Phosphoserine. The residue at position 455 (Ser455) is a Phosphoserine; by PKA and PKB/AKT1 or PKB/AKT2 or BCKDK. Residues Ser459 and Ser481 each carry the phosphoserine modification. Residues 478 to 487 (SVPSPRSLQG) show a composition bias toward polar residues. N6-acetyllysine; alternate is present on residues Lys540, Lys546, and Lys554. Residues Lys540, Lys546, and Lys554 each participate in a glycyl lysine isopeptide (Lys-Gly) (interchain with G-Cter in ubiquitin); alternate cross-link. Thr639 carries the post-translational modification Phosphothreonine. Ser663 is subject to Phosphoserine. Tyr682 carries the phosphotyrosine modification. Residue His760 is the Tele-phosphohistidine intermediate of the active site. CoA is bound at residue 779 to 789 (LKEAGVFVPRS). Ser839 is modified (phosphoserine). N6-acetyllysine is present on residues Lys948, Lys968, Lys978, and Lys1077. At Ser1100 the chain carries Phosphoserine.

This sequence in the N-terminal section; belongs to the succinate/malate CoA ligase beta subunit family. In the C-terminal section; belongs to the succinate/malate CoA ligase alpha subunit family. As to quaternary structure, homotetramer. Mg(2+) is required as a cofactor. In terms of processing, phosphorylated by PKA and GSK3 in a sequential manner; phosphorylation results in activation of its activity. Phosphorylation on Thr-447 and Ser-451 depends on the phosphorylation state of Ser-455. Phosphorylation on Ser-455 is decreased by prior phosphorylation on the other 2 residues. Phosphorylated at Ser-455 by BCKDK and dephosphorylated by protein phosphatase PPM1K. ISGylated. Post-translationally, acetylated at Lys-540, Lys-546 and Lys-554 by KAT2B/PCAF. Acetylation is promoted by glucose and stabilizes the protein, probably by preventing ubiquitination at the same sites. Acetylation promotes de novo lipid synthesis. Deacetylated by SIRT2. In terms of processing, ubiquitinated at Lys-540, Lys-546 and Lys-554 by the BCR(KLHL25) E3 ubiquitin ligase complex and UBR4, leading to its degradation. Ubiquitination is probably inhibited by acetylation at same site. BCR(KLHL25)-mediated degradation of ACLY promotes fatty acid oxidation and is required for differentiation of inducible regulatory T (iTreg) cells.

It is found in the cytoplasm. Its subcellular location is the cytosol. The catalysed reaction is oxaloacetate + acetyl-CoA + ADP + phosphate = citrate + ATP + CoA. Its activity is regulated as follows. Phosphorylation results in activation of its activity. Glucose 6-phosphate, fructose 6-phosphate, fructose 2,6-bisphosphate, ribulose 5-phosphate, and fructose 1,6-bisphosphate also act as activators. In terms of biological role, catalyzes the cleavage of citrate into oxaloacetate and acetyl-CoA, the latter serving as common substrate in multiple biochemical reactions in protein, carbohydrate and lipid metabolism. The protein is ATP-citrate synthase (ACLY) of Homo sapiens (Human).